Here is a 499-residue protein sequence, read N- to C-terminus: Aspartyl/glutamyl-tRNA(Asn/Gln) amidotransferase subunit B (499 aa).

It belongs to the GatB/GatE family. GatB subfamily. Heterotrimer of A, B and C subunits.

The catalysed reaction is L-glutamyl-tRNA(Gln) + L-glutamine + ATP + H2O = L-glutaminyl-tRNA(Gln) + L-glutamate + ADP + phosphate + H(+). The enzyme catalyses L-aspartyl-tRNA(Asn) + L-glutamine + ATP + H2O = L-asparaginyl-tRNA(Asn) + L-glutamate + ADP + phosphate + 2 H(+). Its function is as follows. Allows the formation of correctly charged Asn-tRNA(Asn) or Gln-tRNA(Gln) through the transamidation of misacylated Asp-tRNA(Asn) or Glu-tRNA(Gln) in organisms which lack either or both of asparaginyl-tRNA or glutaminyl-tRNA synthetases. The reaction takes place in the presence of glutamine and ATP through an activated phospho-Asp-tRNA(Asn) or phospho-Glu-tRNA(Gln). This chain is Aspartyl/glutamyl-tRNA(Asn/Gln) amidotransferase subunit B, found in Bifidobacterium animalis subsp. lactis (strain AD011).